The chain runs to 911 residues: General transcription factor 3C polypeptide 2 (911 aa).

2 disordered regions span residues 24–187 (DSPG…RRRA) and 205–297 (ALPA…MAPN). A compositionally biased stretch (polar residues) spans 35–46 (DVKTSSEMTSAE). Ser63 is modified (phosphoserine). Residues 64–81 (PDQRRLPPEQESLSRLEQ) show a composition bias toward basic and acidic residues. Residues 92–112 (SKPRASKPGRKRGGRTRKGPK) are compositionally biased toward basic residues. Residues 114-123 (PQQPNPPSAP) show a composition bias toward pro residues. Phosphoserine is present on residues Ser132, Ser165, Ser167, Ser220, and Ser260. Positions 253–262 (EAEDVEESEG) are enriched in acidic residues. Low complexity predominate over residues 263–277 (PSESSSEPEPVVPRS). WD repeat units follow at residues 366 to 426 (PEDG…MNET), 427 to 483 (HPLS…AWEL), 484 to 535 (PGTP…IYKV), 536 to 603 (QCVA…SLKL), 604 to 654 (YPFQ…NSIK), and 655 to 690 (RFLSTELAWLLPYNGVTVAQDNCYASYGLCGIHYID). Position 597 is a phosphoserine (Ser597). The disordered stretch occupies residues 765 to 785 (SPEGPDHSSASSGVPNPPKAR). 3 positions are modified to phosphoserine: Ser871, Ser892, and Ser893. The tract at residues 889–911 (FQPSSPTRRPGFSPTSHRLLPTP) is disordered. Residue Thr895 is modified to Phosphothreonine. At Ser901 the chain carries Phosphoserine.

In terms of assembly, part of the TFIIIC subcomplex TFIIIC2, consisting of six subunits, GTF3C1, GTF3C2, GTF3C3, GTF3C4, GTF3C5 and GTF3C6.

Its subcellular location is the nucleus. Functionally, required for RNA polymerase III-mediated transcription. Component of TFIIIC that initiates transcription complex assembly on tRNA and is required for transcription of 5S rRNA and other stable nuclear and cytoplasmic RNAs. May play a direct role in stabilizing interactions of TFIIIC2 with TFIIIC1. The chain is General transcription factor 3C polypeptide 2 (GTF3C2) from Homo sapiens (Human).